Here is a 270-residue protein sequence, read N- to C-terminus: Cytochrome c oxidase subunit 3 (270 aa).

A run of 7 helical transmembrane segments spans residues 22–42 (PWPI…GLTM), 46–66 (IGEM…GVLW), 88–108 (INIG…ALFW), 128–148 (VGIT…ILLA), 168–188 (SLSG…CQYI), 205–225 (VFFA…IMLA), and 248–268 (IIYL…FYWW).

It belongs to the cytochrome c oxidase subunit 3 family. In terms of assembly, component of the cytochrome c oxidase (complex IV, CIV), a multisubunit enzyme composed of a catalytic core of 3 subunits and several supernumerary subunits. The complex exists as a monomer or a dimer and forms supercomplexes (SCs) in the inner mitochondrial membrane with ubiquinol-cytochrome c oxidoreductase (cytochrome b-c1 complex, complex III, CIII).

The protein localises to the mitochondrion inner membrane. It catalyses the reaction 4 Fe(II)-[cytochrome c] + O2 + 8 H(+)(in) = 4 Fe(III)-[cytochrome c] + 2 H2O + 4 H(+)(out). Component of the cytochrome c oxidase, the last enzyme in the mitochondrial electron transport chain which drives oxidative phosphorylation. The respiratory chain contains 3 multisubunit complexes succinate dehydrogenase (complex II, CII), ubiquinol-cytochrome c oxidoreductase (cytochrome b-c1 complex, complex III, CIII) and cytochrome c oxidase (complex IV, CIV), that cooperate to transfer electrons derived from NADH and succinate to molecular oxygen, creating an electrochemical gradient over the inner membrane that drives transmembrane transport and the ATP synthase. Cytochrome c oxidase is the component of the respiratory chain that catalyzes the reduction of oxygen to water. Electrons originating from reduced cytochrome c in the intermembrane space (IMS) are transferred via the dinuclear copper A center (CU(A)) of subunit 2 and heme A of subunit 1 to the active site in subunit 1, a binuclear center (BNC) formed by heme A3 and copper B (CU(B)). The BNC reduces molecular oxygen to 2 water molecules using 4 electrons from cytochrome c in the IMS and 4 protons from the mitochondrial matrix. The chain is Cytochrome c oxidase subunit 3 (COX3) from Vanderwaltozyma polyspora (strain ATCC 22028 / DSM 70294 / BCRC 21397 / CBS 2163 / NBRC 10782 / NRRL Y-8283 / UCD 57-17) (Kluyveromyces polysporus).